The sequence spans 455 residues: Kynurenine--oxoglutarate transaminase 3 (455 aa).

Gly71 contacts substrate. Lys116 bears the N6-acetyllysine; alternate mark. Position 116 is an N6-succinyllysine; alternate (Lys116). Asn218 provides a ligand contact to substrate. Residue Lys280 is modified to N6-(pyridoxal phosphate)lysine. Arg430 contributes to the substrate binding site.

The protein belongs to the class-I pyridoxal-phosphate-dependent aminotransferase family. As to quaternary structure, homodimer. Pyridoxal 5'-phosphate serves as cofactor.

The catalysed reaction is L-kynurenine + 2-oxoglutarate = kynurenate + L-glutamate + H2O. It catalyses the reaction L-kynurenine + glyoxylate = kynurenate + glycine + H2O. The enzyme catalyses 3-hydroxy-L-kynurenine + glyoxylate = xanthurenate + glycine + H2O. It carries out the reaction an S-substituted L-cysteine + H2O = a thiol + pyruvate + NH4(+). It participates in amino-acid degradation; L-kynurenine degradation; kynurenate from L-kynurenine: step 1/2. In terms of biological role, catalyzes the irreversible transamination of the L-tryptophan metabolite L-kynurenine to form kynurenic acid (KA), an intermediate in the tryptophan catabolic pathway which is also a broad spectrum antagonist of the three ionotropic excitatory amino acid receptors among others. May catalyze the beta-elimination of S-conjugates and Se-conjugates of L-(seleno)cysteine, resulting in the cleavage of the C-S or C-Se bond. Has transaminase activity towards L-kynurenine, tryptophan, phenylalanine, serine, cysteine, methionine, histidine, glutamine and asparagine with glyoxylate as an amino group acceptor (in vitro). Has lower activity with 2-oxoglutarate as amino group acceptor (in vitro). This Bos taurus (Bovine) protein is Kynurenine--oxoglutarate transaminase 3.